A 35-amino-acid polypeptide reads, in one-letter code: Defensin-B (35 aa).

Disulfide bonds link Cys-4–Cys-25, Cys-10–Cys-33, and Cys-14–Cys-35.

It is found in the secreted. Has antibacterial activity against M.luteus and E.coli. The polypeptide is Defensin-B (Mytilus edulis (Blue mussel)).